Consider the following 102-residue polypeptide: Large ribosomal subunit protein bL21 (102 aa).

This sequence belongs to the bacterial ribosomal protein bL21 family. In terms of assembly, part of the 50S ribosomal subunit. Contacts protein L20.

This protein binds to 23S rRNA in the presence of protein L20. The chain is Large ribosomal subunit protein bL21 from Listeria innocua serovar 6a (strain ATCC BAA-680 / CLIP 11262).